The sequence spans 493 residues: Dipeptide permease D (493 aa).

13 consecutive transmembrane segments (helical) span residues 14–34 (VVALQIWEYFSFYGMRALLIL), 49–69 (ALFSAYCSLVYVTPILGGYLA), 91–111 (LVLGASEIAPTFLYLSLAIIV), 138–158 (GGFSLLYAAGNVGSIVAPIAC), 167–187 (WAMGFALAAIGMVAGLIIFLC), 212–232 (NWGWLLVLLTIAPLAIAVLFW), 235–255 (WAVYALIVATAIGLAVLGKIY), 267–287 (LGLIVTLTFFSMLFWAFAQQG), 312–332 (MFQSVNAFAVMLCGVVLAWLI), 344–364 (IWGKFALGLGLMSAGFSILTL), 379–399 (LMIAGLAVMGFAELFIDPVAM), 413–433 (VLTGIYMLLSGAIANYLAGVI), and 458–478 (VFSEITWGALACVGLVLLIWL).

The protein belongs to the major facilitator superfamily. Proton-dependent oligopeptide transporter (POT/PTR) (TC 2.A.17) family. DtpD subfamily.

The protein localises to the cell inner membrane. Its function is as follows. Probable proton-dependent permease that transports dipeptides. The polypeptide is Dipeptide permease D (Citrobacter rodentium (strain ICC168) (Citrobacter freundii biotype 4280)).